The primary structure comprises 152 residues: Ribosome maturation factor RimP (152 aa).

The protein belongs to the RimP family.

Its subcellular location is the cytoplasm. In terms of biological role, required for maturation of 30S ribosomal subunits. This is Ribosome maturation factor RimP from Burkholderia multivorans (strain ATCC 17616 / 249).